The following is a 264-amino-acid chain: Potassium channel regulatory protein (264 aa).

The region spanning 5 to 74 (DLVTLNVGGR…LRNHELLLPS (70 aa)) is the BTB domain.

Can form homooligomers. Interacts with KCNA1 (via cytoplasmic N-terminal domain) and KCNA4.

The protein resides in the endoplasmic reticulum. Inhibits potassium fluxes in cells. May regulate Kv1 family channel proteins by retaining a fraction of channels in endomembranes. In Mus musculus (Mouse), this protein is Potassium channel regulatory protein (Kcnrg).